Here is a 452-residue protein sequence, read N- to C-terminus: UPF0210 protein Hore_14430 (452 aa).

Belongs to the UPF0210 family. Homodimer.

This is UPF0210 protein Hore_14430 from Halothermothrix orenii (strain H 168 / OCM 544 / DSM 9562).